The following is a 176-amino-acid chain: Nucleoside triphosphate/diphosphate phosphatase (176 aa).

The Proton donor role is filled by Arg-23. Positions 87, 103, 105, 107, 120, and 123 each coordinate Mg(2+).

This sequence belongs to the Ntdp family. Mg(2+) is required as a cofactor.

It catalyses the reaction a ribonucleoside 5'-triphosphate + H2O = a ribonucleoside 5'-diphosphate + phosphate + H(+). The catalysed reaction is a ribonucleoside 5'-diphosphate + H2O = a ribonucleoside 5'-phosphate + phosphate + H(+). Functionally, has nucleoside phosphatase activity towards nucleoside triphosphates and nucleoside diphosphates. This chain is Nucleoside triphosphate/diphosphate phosphatase (ygaC), found in Bacillus subtilis (strain 168).